A 200-amino-acid polypeptide reads, in one-letter code: Small ribosomal subunit protein uS4 (200 aa).

The region spanning 92 to 155 (SRLDAVVYQL…QKLNIIAESV (64 aa)) is the S4 RNA-binding domain.

This sequence belongs to the universal ribosomal protein uS4 family. Part of the 30S ribosomal subunit. Contacts protein S5. The interaction surface between S4 and S5 is involved in control of translational fidelity.

Its function is as follows. One of the primary rRNA binding proteins, it binds directly to 16S rRNA where it nucleates assembly of the body of the 30S subunit. In terms of biological role, with S5 and S12 plays an important role in translational accuracy. The polypeptide is Small ribosomal subunit protein uS4 (Macrococcus caseolyticus (strain JCSC5402) (Macrococcoides caseolyticum)).